An 84-amino-acid chain; its full sequence is Large ribosomal subunit protein bL27 (84 aa).

The interval 1–22 (MAHKKAGGSTRNGRDSESKRLG) is disordered.

This sequence belongs to the bacterial ribosomal protein bL27 family.

In Shewanella loihica (strain ATCC BAA-1088 / PV-4), this protein is Large ribosomal subunit protein bL27.